Reading from the N-terminus, the 599-residue chain is Elongation factor 4 (599 aa).

The 183-residue stretch at 5–187 folds into the tr-type G domain; it reads SKIRNFSIVA…AIVKRLPAPT (183 aa). Residues 17–22 and 134–137 each bind GTP; these read DHGKST and NKID.

Belongs to the TRAFAC class translation factor GTPase superfamily. Classic translation factor GTPase family. LepA subfamily.

Its subcellular location is the cell inner membrane. The catalysed reaction is GTP + H2O = GDP + phosphate + H(+). Functionally, required for accurate and efficient protein synthesis under certain stress conditions. May act as a fidelity factor of the translation reaction, by catalyzing a one-codon backward translocation of tRNAs on improperly translocated ribosomes. Back-translocation proceeds from a post-translocation (POST) complex to a pre-translocation (PRE) complex, thus giving elongation factor G a second chance to translocate the tRNAs correctly. Binds to ribosomes in a GTP-dependent manner. This is Elongation factor 4 from Ruegeria sp. (strain TM1040) (Silicibacter sp.).